Here is a 238-residue protein sequence, read N- to C-terminus: Opacity protein opA66 (238 aa).

Residue Ala-1 is a signal peptide. Disordered stretches follow at residues 88-109 (NLQR…QENG) and 162-183 (GARG…AHQE). A compositionally biased stretch (polar residues) spans 168–183 (PTVSSPYKNTQDAHQE).

The protein belongs to the opacity porin family.

It is found in the cell outer membrane. Its function is as follows. Implicated in a number of adherence functions. OPA proteins are implicated in pathogenesis and are subject to phase variation. The chain is Opacity protein opA66 from Neisseria gonorrhoeae.